The chain runs to 390 residues: Chorismate synthase (390 aa).

NADP(+)-binding residues include Arg39 and Arg45. FMN-binding positions include 132–134 (RSS), 253–254 (NA), Gly298, 313–317 (KPIPT), and Arg339.

The protein belongs to the chorismate synthase family. In terms of assembly, homotetramer. The cofactor is FMNH2.

The catalysed reaction is 5-O-(1-carboxyvinyl)-3-phosphoshikimate = chorismate + phosphate. It participates in metabolic intermediate biosynthesis; chorismate biosynthesis; chorismate from D-erythrose 4-phosphate and phosphoenolpyruvate: step 7/7. In terms of biological role, catalyzes the anti-1,4-elimination of the C-3 phosphate and the C-6 proR hydrogen from 5-enolpyruvylshikimate-3-phosphate (EPSP) to yield chorismate, which is the branch point compound that serves as the starting substrate for the three terminal pathways of aromatic amino acid biosynthesis. This reaction introduces a second double bond into the aromatic ring system. The polypeptide is Chorismate synthase (Bacillus pumilus (strain SAFR-032)).